Here is a 205-residue protein sequence, read N- to C-terminus: Glycerol-3-phosphate acyltransferase (205 aa).

A run of 6 helical transmembrane segments spans residues 8–28 (IALFTLLVSYLLGSLPSGYLA), 57–77 (TPALFVFFIDVTKGIGAILIA), 84–104 (ESLQIAAGLASLSGHIWPVWL), 118–138 (VFLGISWQVGLGSLGIFLLIL), 143–163 (IVSLASISAAISLPVLMLINS), and 164–184 (KETFSIPYIVISFIAMILVLW).

It belongs to the PlsY family. As to quaternary structure, probably interacts with PlsX.

It is found in the cell inner membrane. It carries out the reaction an acyl phosphate + sn-glycerol 3-phosphate = a 1-acyl-sn-glycero-3-phosphate + phosphate. It participates in lipid metabolism; phospholipid metabolism. In terms of biological role, catalyzes the transfer of an acyl group from acyl-phosphate (acyl-PO(4)) to glycerol-3-phosphate (G3P) to form lysophosphatidic acid (LPA). This enzyme utilizes acyl-phosphate as fatty acyl donor, but not acyl-CoA or acyl-ACP. The chain is Glycerol-3-phosphate acyltransferase from Prochlorococcus marinus (strain SARG / CCMP1375 / SS120).